The following is a 156-amino-acid chain: Small ribosomal subunit protein uS7 (156 aa).

Belongs to the universal ribosomal protein uS7 family. In terms of assembly, part of the 30S ribosomal subunit. Contacts proteins S9 and S11.

Functionally, one of the primary rRNA binding proteins, it binds directly to 16S rRNA where it nucleates assembly of the head domain of the 30S subunit. Is located at the subunit interface close to the decoding center, probably blocks exit of the E-site tRNA. This is Small ribosomal subunit protein uS7 from Rhizobium johnstonii (strain DSM 114642 / LMG 32736 / 3841) (Rhizobium leguminosarum bv. viciae).